Reading from the N-terminus, the 601-residue chain is MLQQWLRQSPRAARVLRGSCCRGPQSGSLRHSPLPTAPHRCIRSLQTSATESKERIPLRKQLKQDAKALKAQKRQKRASEEASRTKWELTVGIEIHAQLNTETKLFSRASTSNTDTPNSNVALFDLAFPGSQPEFQATALLPALRAAIALNCDIQPVSRFDRKHYFYQDQPAGYQITQYYEPFAKNGYVDLFPHDGIAPEDGDHVRIGIKQIQLEQDTAKSQEYPPSTQLLDFNRVSHPLIEIITMPQIHNPATAAACVRKIQAVLQSCSAVTTGMELGGLRADVNVSIRRRDEAPGTHQYGGIGGLGQRTEIKNLSSFKAVEDAVIAEKNRQIAVLESGGVIEGETRGWTIGSTETRKLRGKEGEVDYRYMPDPDLPPLIIGHDLISNLRDSLPTPPDQLIEMLAGTEYGLSIEDAKPLIELDDGARLEYYQDVVDILRDLQQDKDAKSRGGLARMAGNWVLHELGGLCTKADLAWDAQRVPAETLAQIIDQLQRKRITGATAKQVLAMVFDGDRRPVPQLLEEENLLLRPLSRDEYLALAEAAIGQNPQMVEQIRAKNQLGKLGWFVGQMMRMGEKGRVEAQKADEILRELILGKSDQP.

The N-terminal 52 residues, Met1–Ser52, are a transit peptide targeting the mitochondrion.

It belongs to the GatB/GatE family. GatB subfamily. As to quaternary structure, subunit of the heterotrimeric GatCAB amidotransferase (AdT) complex, composed of A, B and C subunits.

The protein resides in the mitochondrion. The catalysed reaction is L-glutamyl-tRNA(Gln) + L-glutamine + ATP + H2O = L-glutaminyl-tRNA(Gln) + L-glutamate + ADP + phosphate + H(+). In terms of biological role, allows the formation of correctly charged Gln-tRNA(Gln) through the transamidation of misacylated Glu-tRNA(Gln) in the mitochondria. The reaction takes place in the presence of glutamine and ATP through an activated gamma-phospho-Glu-tRNA(Gln). The sequence is that of Glutamyl-tRNA(Gln) amidotransferase subunit B, mitochondrial from Aspergillus fumigatus (strain ATCC MYA-4609 / CBS 101355 / FGSC A1100 / Af293) (Neosartorya fumigata).